Here is a 306-residue protein sequence, read N- to C-terminus: MANITAALVKELREKTGAGMMDCKGALNETNGDLEAAVDWLRKKGLAKAAKKAGRVAAEGLVAVESAGHHAAIVEVNSETDFVARNDGFQAFAREAAKLALNTDGTLEGLQAATFPGSSETVQEKLSNLIATIGENMTLRRVAKLEVSKGVIASYVHGQISEGLGKIGVLVALESEGDVEVLSTLGRQIAMHIAATSPVALDASGVDPAVVERESNILREKNAGKPDHVMAKIVESGLKSYYKEVTLLEQPFVHDGSKTITQVLKEAAGKAGAEVAIKGFIRYALGEGIEKEEGPDFAAEVASMSR.

Positions 80-83 (TDFV) are involved in Mg(2+) ion dislocation from EF-Tu.

This sequence belongs to the EF-Ts family.

Its subcellular location is the cytoplasm. In terms of biological role, associates with the EF-Tu.GDP complex and induces the exchange of GDP to GTP. It remains bound to the aminoacyl-tRNA.EF-Tu.GTP complex up to the GTP hydrolysis stage on the ribosome. This Methylorubrum populi (strain ATCC BAA-705 / NCIMB 13946 / BJ001) (Methylobacterium populi) protein is Elongation factor Ts.